A 1040-amino-acid chain; its full sequence is V(D)J recombination-activating protein 1 (1040 aa).

Basic and acidic residues predominate over residues 39–53; sequence EKAPEEAQKEKDSSE. A disordered region spans residues 39–71; the sequence is EKAPEEAQKEKDSSEGKPYLEQSPVVPEKPGGQ. Lysine 233 is covalently cross-linked (Glycyl lysine isopeptide (Lys-Gly) (interchain with G-Cter in ubiquitin)). Cysteine 266, histidine 270, cysteine 290, cysteine 293, histidine 295, cysteine 305, histidine 307, cysteine 310, cysteine 313, cysteine 325, cysteine 328, cysteine 355, cysteine 360, histidine 372, and histidine 376 together coordinate Zn(2+). The RING-type zinc-finger motif lies at 290–329; it reads CQICEHILADPVETSCKHLFCRICILRCLKVMGSYCPSCR. An RAG1-type zinc finger spans residues 351–380; that stretch reads LMVKCPAQDCNEEVSLEKYNHHVSSHKESK. Residues 389-456 constitute a DNA-binding region (NBD); that stretch reads GGRPRQHLLS…QADELEAIMQ (68 aa). Positions 600, 708, and 962 each coordinate a divalent metal cation.

The protein belongs to the RAG1 family. In terms of assembly, homodimer. Component of the RAG complex composed of core components RAG1 and RAG2, and associated component HMGB1 or HMGB2. Interacts with DCAF1, leading to recruitment of the CUL4A-RBX1-DDB1-DCAF1/VPRBP complex to ubiquitinate proteins and limit error-prone repair during V(D)J recombination. Mg(2+) serves as cofactor. It depends on Mn(2+) as a cofactor. In terms of processing, autoubiquitinated in the presence of CDC34/UBCH3. Maturing lymphoid cells and central nervous system.

It localises to the nucleus. It carries out the reaction S-ubiquitinyl-[E2 ubiquitin-conjugating enzyme]-L-cysteine + [acceptor protein]-L-lysine = [E2 ubiquitin-conjugating enzyme]-L-cysteine + N(6)-ubiquitinyl-[acceptor protein]-L-lysine.. Functionally, catalytic component of the RAG complex, a multiprotein complex that mediates the DNA cleavage phase during V(D)J recombination. V(D)J recombination assembles a diverse repertoire of immunoglobulin and T-cell receptor genes in developing B and T-lymphocytes through rearrangement of different V (variable), in some cases D (diversity), and J (joining) gene segments. In the RAG complex, RAG1 mediates the DNA-binding to the conserved recombination signal sequences (RSS) and catalyzes the DNA cleavage activities by introducing a double-strand break between the RSS and the adjacent coding segment. RAG2 is not a catalytic component but is required for all known catalytic activities. DNA cleavage occurs in 2 steps: a first nick is introduced in the top strand immediately upstream of the heptamer, generating a 3'-hydroxyl group that can attack the phosphodiester bond on the opposite strand in a direct transesterification reaction, thereby creating 4 DNA ends: 2 hairpin coding ends and 2 blunt, 5'-phosphorylated ends. The chromatin structure plays an essential role in the V(D)J recombination reactions and the presence of histone H3 trimethylated at 'Lys-4' (H3K4me3) stimulates both the nicking and haipinning steps. The RAG complex also plays a role in pre-B cell allelic exclusion, a process leading to expression of a single immunoglobulin heavy chain allele to enforce clonality and monospecific recognition by the B-cell antigen receptor (BCR) expressed on individual B-lymphocytes. The introduction of DNA breaks by the RAG complex on one immunoglobulin allele induces ATM-dependent repositioning of the other allele to pericentromeric heterochromatin, preventing accessibility to the RAG complex and recombination of the second allele. In addition to its endonuclease activity, RAG1 also acts as an E3 ubiquitin-protein ligase that mediates monoubiquitination of histone H3. Histone H3 monoubiquitination is required for the joining step of V(D)J recombination. Mediates polyubiquitination of KPNA1. The sequence is that of V(D)J recombination-activating protein 1 (Rag1) from Mus musculus (Mouse).